Reading from the N-terminus, the 2115-residue chain is Non-reducing polyketide synthase ascC (2115 aa).

Positions 1–21 (MTLIQTKHSASAAVFSPQSTA) are disordered. The segment at 14-260 (VFSPQSTAPK…HNSRNTELAQ (247 aa)) is N-terminal acylcarrier protein transacylase domain (SAT). Positions 381–805 (PDSIAIVGSA…GSNSALICSE (425 aa)) constitute a Ketosynthase family 3 (KS3) domain. Catalysis depends on for beta-ketoacyl synthase activity residues C553, H689, and H728. Positions 908 to 1210 (LTFSGQSRTT…ANPSAHTFQA (303 aa)) are malonyl-CoA:ACP transacylase (MAT) domain. S995 functions as the For acyl/malonyl transferase activity in the catalytic mechanism. The segment at 1280–1406 (PKKVQQLVTL…GDFFATSGEM (127 aa)) is N-terminal hotdog fold. A PKS/mFAS DH domain is found at 1280–1581 (PKKVQQLVTL…FMRIKAAKLE (302 aa)). The interval 1285–1580 (QLVTLKKTEG…QFMRIKAAKL (296 aa)) is product template (PT) domain. H1315 functions as the Proton acceptor; for dehydratase activity in the catalytic mechanism. The interval 1428–1581 (DAERLRTATA…FMRIKAAKLE (154 aa)) is C-terminal hotdog fold. D1492 (proton donor; for dehydratase activity) is an active-site residue. Positions 1587–1624 (ANPGSKTKSTNGNALPSVPRSVPAGPTSAPQQVAPTTM) are disordered. The segment covering 1588-1600 (NPGSKTKSTNGNA) has biased composition (polar residues). The Carrier domain occupies 1640–1724 (PSKIADLKSL…PTAALTEGLV (85 aa)). S1674 is modified (O-(pantetheine 4'-phosphoryl)serine). Residues 1734-1748 (SDSIRNSTGFHTTIP) show a composition bias toward polar residues. The interval 1734 to 1767 (SDSIRNSTGFHTTIPATPAELHSNPPDSLDGSTV) is disordered. The interval 1777–2107 (ARFKLDTMVY…YDFLLGELEN (331 aa)) is thioesterase (TE) domain. Residues S1897 and D2045 each act as for thioesterase activity in the active site.

It carries out the reaction 3 malonyl-CoA + acetyl-CoA + 2 H(+) = orsellinate + 3 CO2 + 4 CoA. It functions in the pathway secondary metabolite biosynthesis; terpenoid biosynthesis. Functionally, non-reducing polyketide synthase; part of the asc-1 gene cluster that mediates the biosynthesis of both ascochlorin and ascofuranone, a strong inhibitor of cyanide-insensitive alternative oxidases and a promising drug candidate against African trypanosomiasis. The first step in the pathway is performed by the non-reducing polyketide synthase ascC that produces orsellinic acid by condensing acetyl-CoA with 3 malonyl-CoA units. Orsellinic acid is then prenylated by the prenyltransferase ascA to yield ilicicolinic acid B. Ilicicolinic acid B is further reduced to ilicicolin B by the reductase ascB. The halogenase ascD then chlorinates ilicicolin B to produce ilicicolin A which is converted to ilicicolin A epoxide by the cytochrome P450 monooxygenase ascE that catalyzes stereoselective epoxidation of the terminal double bond of the prenyl group. Ilicicolin A epoxide is the last common precursor for the biosynthesis of ascofuranone and ascochlorin. The terpene cyclase ascF produces a monocyclic terpene, and the cyclization reaction is proposed to be initiated by protonation of the terminal epoxide of ilicicolin A epoxide to generate a monocyclic tertiarycation, which is followed by a series of hydride and methyl shifts with abstraction of proton, leading to the formation of the (14S,15R,19R)-trimethylcyclohexanone ring structure of ilicicolin C, which is finally reduced to ascochlorin by the dehydrogenase ascG. On the other hand, ilicicolin A epoxide is hydroxylated by the cytochrome P450 monooxygenase ascH, and the resultant product is cyclized by the terpene cyclase ascI to ascofuranol via protonation-initiated epoxide ring opening, which facilitates the 6-endo-tet cyclization to form the tetrahy-drofuran ring. Finally, ascofuranol is oxidized into ascofuranone by ascJ. This is Non-reducing polyketide synthase ascC from Acremonium egyptiacum (Oospora egyptiaca).